A 340-amino-acid chain; its full sequence is Solute carrier family 35 member G3 (340 aa).

A disordered region spans residues 11–31; sequence PDFTQPSPPSTPSSLTSNHHN. 9 helical membrane-spanning segments follow: residues 39 to 59, 69 to 89, 107 to 127, 160 to 180, 189 to 209, 223 to 243, 257 to 277, 283 to 303, and 307 to 327; these read TKGL…VGPF, LPSL…ALIL, FLHA…VQVV, AWCG…PGLG, LYTA…SLGL, TVAF…LFVL, CMVA…YAVT, LVCA…YYVL, and VAPS…IITA. The EamA 1 domain occupies 51–176; that stretch reads LSAGFVGPFS…STLGLIIIVG (126 aa). An EamA 2 domain is found at 223-327; sequence TVAFLFGLVG…VLGSIAIITA (105 aa).

The protein belongs to the SLC35G solute transporter family.

It localises to the membrane. This Rattus norvegicus (Rat) protein is Solute carrier family 35 member G3 (Slc35g3).